Consider the following 854-residue polypeptide: Putative COX1/OXI3 intron 2 protein (854 aa).

The region spanning leucine 329–valine 613 is the Reverse transcriptase domain.

It localises to the mitochondrion. In Saccharomyces cerevisiae (strain ATCC 204508 / S288c) (Baker's yeast), this protein is Putative COX1/OXI3 intron 2 protein (AI2).